The chain runs to 376 residues: Putative 12-oxophytodienoate reductase 13 (376 aa).

Residues 25–27 (PLT), Ala-58, and Gln-99 each bind FMN. 165–168 (HGAH) contacts substrate. FMN-binding positions include Arg-217, Gly-301, and 322 to 323 (GR).

This sequence belongs to the NADH:flavin oxidoreductase/NADH oxidase family. It depends on FMN as a cofactor.

Functionally, putative oxophytodienoate reductase that may be involved in the biosynthesis or metabolism of oxylipin signaling molecules. The chain is Putative 12-oxophytodienoate reductase 13 (OPR13) from Oryza sativa subsp. japonica (Rice).